Reading from the N-terminus, the 152-residue chain is UPF0266 membrane protein KPK_1957 (152 aa).

3 consecutive transmembrane segments (helical) span residues 6–26, 45–65, and 67–87; these read LVIILFILALLAYAVYDQFIM, VDGLIFVGLTAILIYNNITQH, and TPITTWLLSALALMGLYLFWI.

It belongs to the UPF0266 family.

Its subcellular location is the cell inner membrane. The protein is UPF0266 membrane protein KPK_1957 of Klebsiella pneumoniae (strain 342).